Consider the following 92-residue polypeptide: Large ribosomal subunit protein bL25 (92 aa).

The protein belongs to the bacterial ribosomal protein bL25 family. In terms of assembly, part of the 50S ribosomal subunit; part of the 5S rRNA/L5/L18/L25 subcomplex. Contacts the 5S rRNA. Binds to the 5S rRNA independently of L5 and L18.

Functionally, this is one of the proteins that binds to the 5S RNA in the ribosome where it forms part of the central protuberance. The protein is Large ribosomal subunit protein bL25 of Aliivibrio fischeri (strain MJ11) (Vibrio fischeri).